The sequence spans 543 residues: T-complex protein 1 subunit eta (543 aa).

The residue at position 1 (methionine 1) is an N-acetylmethionine. Glycine 41 contributes to the ADP binding site. Residue glycine 41 participates in ATP binding. The residue at position 67 (lysine 67) is an N6-acetyllysine. Aspartate 92 contacts Mg(2+). Residues glycine 93, threonine 94, threonine 95, serine 96, serine 164, and serine 165 each coordinate ADP. Position 93 (glycine 93) interacts with ATP. Serine 96 serves as a coordination point for ATP. Lysine 250 and lysine 320 each carry N6-acetyllysine. Arginine 398 and glycine 409 together coordinate ATP. Glycine 409 contacts ADP. Lysine 430 participates in a covalent cross-link: Glycyl lysine isopeptide (Lys-Gly) (interchain with G-Cter in SUMO2). ADP contacts are provided by glutamate 494 and arginine 499. Arginine 499 provides a ligand contact to ATP. Arginine 535 carries the omega-N-methylarginine modification.

Belongs to the TCP-1 chaperonin family. As to quaternary structure, component of the chaperonin-containing T-complex (TRiC), a hexadecamer composed of two identical back-to-back stacked rings enclosing a protein folding chamber. Each ring is made up of eight different subunits: TCP1/CCT1, CCT2, CCT3, CCT4, CCT5, CCT6A/CCT6, CCT7, CCT8. Interacts with PACRG. Interacts with DLEC1.

Its subcellular location is the cytoplasm. It carries out the reaction ATP + H2O = ADP + phosphate + H(+). In terms of biological role, component of the chaperonin-containing T-complex (TRiC), a molecular chaperone complex that assists the folding of actin, tubulin and other proteins upon ATP hydrolysis. The TRiC complex mediates the folding of WRAP53/TCAB1, thereby regulating telomere maintenance. This Pongo abelii (Sumatran orangutan) protein is T-complex protein 1 subunit eta (CCT7).